A 178-amino-acid chain; its full sequence is tRNA (cytidine(56)-2'-O)-methyltransferase (178 aa).

Residues L84, 112-116 (GAEKV), and 130-137 (VGNQPHSE) each bind S-adenosyl-L-methionine.

The protein belongs to the aTrm56 family. As to quaternary structure, homodimer.

Its subcellular location is the cytoplasm. The enzyme catalyses cytidine(56) in tRNA + S-adenosyl-L-methionine = 2'-O-methylcytidine(56) in tRNA + S-adenosyl-L-homocysteine + H(+). Its function is as follows. Specifically catalyzes the AdoMet-dependent 2'-O-ribose methylation of cytidine at position 56 in tRNAs. This is tRNA (cytidine(56)-2'-O)-methyltransferase from Methanocella arvoryzae (strain DSM 22066 / NBRC 105507 / MRE50).